A 547-amino-acid polypeptide reads, in one-letter code: Solute carrier family 22 member 25 (547 aa).

Residues 1 to 9 lie on the Cytoplasmic side of the membrane; that stretch reads MAFQDLLDQ. Residues 10–30 form a helical membrane-spanning segment; that stretch reads VGGLGRFQILQMVFLIMFNVI. Over 31-145 the chain is Extracellular; the sequence is VYHQTQLENF…DLVCESQPLN (115 aa). 2 N-linked (GlcNAc...) asparagine glycosylation sites follow: N56 and N102. Residues 146 to 166 form a helical membrane-spanning segment; sequence SVAKFLFMAGMMVGGNLYGHL. Residues 167–177 lie on the Cytoplasmic side of the membrane; it reads SDRFGRKFVLR. Residues 178 to 198 form a helical membrane-spanning segment; that stretch reads WSYLQLAIVGTCAAFAPTILV. Topologically, residues 199 to 204 are extracellular; the sequence is YCSLRF. A helical transmembrane segment spans residues 205–225; that stretch reads LAGAATFSIIVNTVLLIVEWI. Residues 226–234 lie on the Cytoplasmic side of the membrane; it reads THQFCAMAL. Residues 235–255 form a helical membrane-spanning segment; it reads TLTLCAASIGHITLGSLAFVI. Topologically, residues 256–259 are extracellular; the sequence is RDQC. A helical transmembrane segment spans residues 260–280; the sequence is ILQLVMSAPCFVFFLFSRWLA. Residues 281-349 lie on the Cytoplasmic side of the membrane; the sequence is ESARWLIINN…LLRIPNICKR (69 aa). Residues 350–370 form a helical membrane-spanning segment; sequence ICFLSFVRFASTIPFWGLTLH. Residues 371–377 lie on the Extracellular side of the membrane; the sequence is LQHLGNN. The helical transmembrane segment at 378 to 398 threads the bilayer; the sequence is VFLLQTLFGAVTLLANCVAPW. The Cytoplasmic portion of the chain corresponds to 399-406; it reads ALNHMSRR. A helical transmembrane segment spans residues 407–427; it reads LSQMLLMFLLATCLLAIIFVP. The Extracellular segment spans residues 428–434; that stretch reads QEMQTLR. Residues 435-455 traverse the membrane as a helical segment; the sequence is VVLATLGVGAASLGITCSTAQ. Topologically, residues 456-470 are cytoplasmic; the sequence is ENELIPSIIRGRATG. Residues 471–491 form a helical membrane-spanning segment; the sequence is ITGNFANIGGALASLMMILSI. Residues 492-494 are Extracellular-facing; the sequence is YSR. Residues 495-515 traverse the membrane as a helical segment; it reads PLPWIIYGVFAILSGLVVLLL. Residues 516-547 are Cytoplasmic-facing; it reads PETRNQPLLDSIQDVENEGVNSLAAPQRSSVL.

The protein belongs to the major facilitator (TC 2.A.1) superfamily. Organic cation transporter (TC 2.A.1.19) family. As to expression, expressed exclusively in liver in both embryo and adult.

It localises to the membrane. The chain is Solute carrier family 22 member 25 from Homo sapiens (Human).